Reading from the N-terminus, the 256-residue chain is Phosphatidylglycerol--prolipoprotein diacylglyceryl transferase 2 (256 aa).

The next 3 helical transmembrane spans lie at 11–31 (LKIY…TLLF), 46–66 (FNAT…LYII), and 83–103 (FGNG…IALC). Arg130 is an a 1,2-diacyl-sn-glycero-3-phospho-(1'-sn-glycerol) binding site. Helical transmembrane passes span 142-162 (AETT…PAGV), 164-184 (LYPT…FLLW), and 221-241 (VGLL…GILL).

Belongs to the Lgt family.

The protein localises to the cell membrane. The enzyme catalyses L-cysteinyl-[prolipoprotein] + a 1,2-diacyl-sn-glycero-3-phospho-(1'-sn-glycerol) = an S-1,2-diacyl-sn-glyceryl-L-cysteinyl-[prolipoprotein] + sn-glycerol 1-phosphate + H(+). It functions in the pathway protein modification; lipoprotein biosynthesis (diacylglyceryl transfer). Catalyzes the transfer of the diacylglyceryl group from phosphatidylglycerol to the sulfhydryl group of the N-terminal cysteine of a prolipoprotein, the first step in the formation of mature lipoproteins. This is Phosphatidylglycerol--prolipoprotein diacylglyceryl transferase 2 from Clostridium perfringens (strain 13 / Type A).